A 216-amino-acid chain; its full sequence is Uracil phosphoribosyltransferase (216 aa).

5-phospho-alpha-D-ribose 1-diphosphate-binding positions include Arg85, Arg110, and 135 to 143 (DPMVATGYS). Uracil-binding positions include Ile200 and 205-207 (GDA). A 5-phospho-alpha-D-ribose 1-diphosphate-binding site is contributed by Asp206.

Belongs to the UPRTase family. Mg(2+) serves as cofactor.

It catalyses the reaction UMP + diphosphate = 5-phospho-alpha-D-ribose 1-diphosphate + uracil. It participates in pyrimidine metabolism; UMP biosynthesis via salvage pathway; UMP from uracil: step 1/1. Its activity is regulated as follows. Allosterically activated by GTP. Its function is as follows. Catalyzes the conversion of uracil and 5-phospho-alpha-D-ribose 1-diphosphate (PRPP) to UMP and diphosphate. The sequence is that of Uracil phosphoribosyltransferase from Burkholderia mallei (strain NCTC 10247).